A 490-amino-acid polypeptide reads, in one-letter code: Tektin-3 (490 aa).

O-linked (GalNAc...) threonine glycans are attached at residues Thr7, Thr9, and Thr10. N-linked (GlcNAc...) asparagine glycosylation is found at Asn41, Asn86, Asn103, Asn111, Asn276, and Asn344. The stretch at 424 to 451 (VHEVDDTIQTLQQRLRDAEDTLQSLVHI) forms a coiled coil.

This sequence belongs to the tektin family. As to quaternary structure, microtubule inner protein component of sperm flagellar doublet microtubules. Interacts with TEKT1, TEKT2, TEKT4 and TEKT5. Interacts with CCDC38. In terms of processing, N- and O-glycosylated. Post-translationally, may be proteolytically processed during the epididymal transit of spermatozoa. Ubiquitinated, leading to its degradation. Deubiquitinated by USP16, promoting its stability. In terms of tissue distribution, expressed in spermatozoa. Expressed in airway epithelial cells.

Its subcellular location is the cytoplasm. It is found in the cytoskeleton. The protein localises to the cilium axoneme. It localises to the flagellum axoneme. The protein resides in the cytoplasmic vesicle. Its subcellular location is the secretory vesicle. It is found in the acrosome outer membrane. Its function is as follows. Microtubule inner protein (MIP) part of the dynein-decorated doublet microtubules (DMTs) in cilia and flagellar axoneme. Forms filamentous polymers in the walls of ciliary and flagellar microtubules. Required for normal sperm mobility. The polypeptide is Tektin-3 (TEKT3) (Homo sapiens (Human)).